Here is a 298-residue protein sequence, read N- to C-terminus: Methylsterol monooxygenase 1-1 (298 aa).

A run of 3 helical transmembrane segments spans residues 42 to 62 (ILFL…VELA), 96 to 116 (FILV…MIEI), and 118 to 138 (SGLP…YFLI). A Fatty acid hydroxylase domain is found at 132–267 (LVVYFLIEDY…FTYCDYIYGT (136 aa)). Residues 147–151 (HRFFH) carry the Histidine box-1 motif. A Histidine box-2 motif is present at residues 160 to 164 (HRVHH). A helical transmembrane segment spans residues 189–209 (TFMGPAIAPGHMITFWLWIAL). The Histidine box-3 motif lies at 239–245 (YHDYHHY).

Belongs to the sterol desaturase family. In terms of assembly, interacts with ACBP1. Requires Fe cation as cofactor. As to expression, expressed in rosettes, stems, roots, floral buds, flowers and siliques.

It is found in the endoplasmic reticulum membrane. The enzyme catalyses 4,4-dimethyl-5alpha-cholest-7-en-3beta-ol + 6 Fe(II)-[cytochrome b5] + 3 O2 + 5 H(+) = 4alpha-carboxy-4beta-methyl-5alpha-cholest-7-ene-3beta-ol + 6 Fe(III)-[cytochrome b5] + 4 H2O. The catalysed reaction is 24-methylenecycloartanol + 6 Fe(II)-[cytochrome b5] + 3 O2 + 5 H(+) = 4alpha-carboxy-4beta,14alpha-dimethyl-9beta,19-cyclo-5alpha-ergost-24(24(1))-en-3beta-ol + 6 Fe(III)-[cytochrome b5] + 4 H2O. Its function is as follows. Non-heme iron oxygenase involved in sterols biosynthesis by catalyzing the removal of the first methyl group at the C-4 position. 4,4-dimethyl-9-beta,19-cyclopropylsterols such as 24-methylenecycloartanol are the preferred substrates. Acts as a rate-limiting enzyme in the sterol pathway via interaction with ACBP1; sterols serve as lipid modulators for gene expression of homeodomain-leucine zipper IV transcription factors. Together with SMO1-2, involved in the maintenance of sterol composition to balance auxin and cytokinin activities during embryogenesis. In Arabidopsis thaliana (Mouse-ear cress), this protein is Methylsterol monooxygenase 1-1.